A 712-amino-acid chain; its full sequence is MQHKTQLTLSFLLSQVLLLACAEDLECTPGFQQKVFYIEQPFEFTEDQPILNLVFDDCKGNNKLNFEVSNPDFKVEHDGSLVALKNVSEAGRALFVHARSEHAEDMAEILIVGADEKHDALKEIFKIEGNLGIPRQKRAILATPILIPENQRPPFPRSVGKVIRSEGTEGAKFRLSGKGVDQDPKGIFRINEISGDVSVTRPLDREAIANYELEVEVTDLSGKIIDGPVRLDISVIDQNDNRPMFKEGPYVGHVMEGSPTGTTVMRMTAFDADDPSTDNALLRYNILKQTPTKPSPNMFYIDPEKGDIVTVVSPVLLDRETMETPKYELVIEAKDMGGHDVGLTGTATATILIDDKNDHPPEFTKKEFQATVKEGVTGVIVNLTVGDRDDPATGAWRAVYTIINGNPGQSFEIHTNPQTNEGMLSVVKPLDYEISAFHTLLIKVENEDPLIPDIAYGPSSTATVQITVEDVNEGPVFHPNPMTVTKQENIPIGSIVLTVNATDPDTLQHQTIRYSVYKDPASWLEINPTNGTVATTAVLDRESPHVQDNKYTALFLAIDSGNPPATGTGTLHITLEDVNDNVPSLYPTLAKVCDDAKDLRVVVLGASDKDLHPNTDPFKFELSKQSGPEKLWRINKLNNTHAQVVLLQNLKKANYNIPISVTDSGKPPLTNNTELKLQVCSCKKSRMDCSASDALHISMTLILLSLFSLFCL.

Positions 1–22 (MQHKTQLTLSFLLSQVLLLACA) are cleaved as a signal peptide. The propeptide occupies 23–138 (EDLECTPGFQ…GNLGIPRQKR (116 aa)). Residue N86 is glycosylated (N-linked (GlcNAc...) asparagine). Cadherin domains lie at 143-245 (TPIL…RPMF), 246-363 (KEGP…PPEF), 364-477 (TKKE…GPVF), 478-585 (HPNP…VPSL), and 586-680 (YPTL…LQVC). N-linked (GlcNAc...) asparagine glycans are attached at residues N382, N500, N530, N638, and N671. A lipid anchor (GPI-anchor amidated aspartate) is attached at D693. A propeptide spans 694–712 (ALHISMTLILLSLFSLFCL) (removed in mature form).

As to quaternary structure, by contrast to classical cadherins, homodimerization in trans is not mediated by cadherin EC1 domain strand-swapping, but instead through a homophilic adhesive interface which joins two elongated EC1-EC2 domains through a region near their Ca2+-binding sites to form a tetrahedral, X-like shape. Neural tissues. Also found in muscles; kidney and retina.

Its subcellular location is the cell membrane. The protein resides in the cytoplasm. In terms of biological role, cadherins are calcium-dependent cell adhesion proteins. They preferentially interact with themselves in a homophilic manner in connecting cells; cadherins may thus contribute to the sorting of heterogeneous cell types. May act as a negative regulator of neural cell growth. This is Cadherin-13 (CDH13) from Gallus gallus (Chicken).